The primary structure comprises 139 residues: uncharacterized protein (139 aa).

In terms of domain architecture, HTH asnC-type spans 1–62 (MDDTDLQILS…NICYEKLNKH (62 aa)). Residues 20-39 (MVELGKLVGLSSPSAAERVR) constitute a DNA-binding region (H-T-H motif).

This is an uncharacterized protein from Bacillus subtilis (strain 168).